The primary structure comprises 412 residues: uncharacterized protein (412 aa).

Histidine 49 contributes to the Zn(2+) binding site. Catalysis depends on glutamate 52, which acts as the Proton acceptor. Zn(2+)-binding residues include histidine 53 and glutamate 129.

This sequence belongs to the peptidase M16 family. Requires Zn(2+) as cofactor.

This is an uncharacterized protein from Rickettsia typhi (strain ATCC VR-144 / Wilmington).